The following is an 853-amino-acid chain: DNA mismatch repair protein MutS (853 aa).

Position 614–621 (614–621 (GPNMGGKS)) interacts with ATP.

The protein belongs to the DNA mismatch repair MutS family.

Its function is as follows. This protein is involved in the repair of mismatches in DNA. It is possible that it carries out the mismatch recognition step. This protein has a weak ATPase activity. The polypeptide is DNA mismatch repair protein MutS (Shigella boydii serotype 18 (strain CDC 3083-94 / BS512)).